An 877-amino-acid polypeptide reads, in one-letter code: Alanine--tRNA ligase (877 aa).

Zn(2+)-binding residues include His561, His565, Cys669, and His673.

It belongs to the class-II aminoacyl-tRNA synthetase family. Requires Zn(2+) as cofactor.

The protein resides in the cytoplasm. The enzyme catalyses tRNA(Ala) + L-alanine + ATP = L-alanyl-tRNA(Ala) + AMP + diphosphate. Functionally, catalyzes the attachment of alanine to tRNA(Ala) in a two-step reaction: alanine is first activated by ATP to form Ala-AMP and then transferred to the acceptor end of tRNA(Ala). Also edits incorrectly charged Ser-tRNA(Ala) and Gly-tRNA(Ala) via its editing domain. This chain is Alanine--tRNA ligase, found in Endomicrobium trichonymphae.